A 211-amino-acid polypeptide reads, in one-letter code: Large ribosomal subunit protein eL13 (211 aa).

This sequence belongs to the eukaryotic ribosomal protein eL13 family. As to quaternary structure, component of the 60S large ribosomal subunit (LSU).

It is found in the cytoplasm. Functionally, component of the ribosome, a large ribonucleoprotein complex responsible for the synthesis of proteins in the cell. The small ribosomal subunit (SSU) binds messenger RNAs (mRNAs) and translates the encoded message by selecting cognate aminoacyl-transfer RNA (tRNA) molecules. The large subunit (LSU) contains the ribosomal catalytic site termed the peptidyl transferase center (PTC), which catalyzes the formation of peptide bonds, thereby polymerizing the amino acids delivered by tRNAs into a polypeptide chain. The nascent polypeptides leave the ribosome through a tunnel in the LSU and interact with protein factors that function in enzymatic processing, targeting, and the membrane insertion of nascent chains at the exit of the ribosomal tunnel. As part of the LSU, it is probably required for its formation and the maturation of rRNAs. The sequence is that of Large ribosomal subunit protein eL13 (rpl13) from Ictalurus punctatus (Channel catfish).